Here is a 946-residue protein sequence, read N- to C-terminus: Bifunctional glutamine synthetase adenylyltransferase/adenylyl-removing enzyme (946 aa).

The tract at residues 1–440 (MKPLSSPLQQ…VFNELIGDDE (440 aa)) is adenylyl removase. An adenylyl transferase region spans residues 449–946 (SEQWRELWQD…ASWQKWLVEE (498 aa)).

This sequence belongs to the GlnE family. Requires Mg(2+) as cofactor.

The catalysed reaction is [glutamine synthetase]-O(4)-(5'-adenylyl)-L-tyrosine + phosphate = [glutamine synthetase]-L-tyrosine + ADP. The enzyme catalyses [glutamine synthetase]-L-tyrosine + ATP = [glutamine synthetase]-O(4)-(5'-adenylyl)-L-tyrosine + diphosphate. In terms of biological role, involved in the regulation of glutamine synthetase GlnA, a key enzyme in the process to assimilate ammonia. When cellular nitrogen levels are high, the C-terminal adenylyl transferase (AT) inactivates GlnA by covalent transfer of an adenylyl group from ATP to specific tyrosine residue of GlnA, thus reducing its activity. Conversely, when nitrogen levels are low, the N-terminal adenylyl removase (AR) activates GlnA by removing the adenylyl group by phosphorolysis, increasing its activity. The regulatory region of GlnE binds the signal transduction protein PII (GlnB) which indicates the nitrogen status of the cell. The chain is Bifunctional glutamine synthetase adenylyltransferase/adenylyl-removing enzyme from Shigella boydii serotype 4 (strain Sb227).